The primary structure comprises 254 residues: Methylthioribulose-1-phosphate dehydratase (254 aa).

Cys110 provides a ligand contact to substrate. Zn(2+) contacts are provided by His127 and His129. The Proton donor/acceptor role is filled by Glu156. His212 provides a ligand contact to Zn(2+).

Belongs to the aldolase class II family. MtnB subfamily. Zn(2+) is required as a cofactor.

Its subcellular location is the cytoplasm. The catalysed reaction is 5-(methylsulfanyl)-D-ribulose 1-phosphate = 5-methylsulfanyl-2,3-dioxopentyl phosphate + H2O. The protein operates within amino-acid biosynthesis; L-methionine biosynthesis via salvage pathway; L-methionine from S-methyl-5-thio-alpha-D-ribose 1-phosphate: step 2/6. In terms of biological role, catalyzes the dehydration of methylthioribulose-1-phosphate (MTRu-1-P) into 2,3-diketo-5-methylthiopentyl-1-phosphate (DK-MTP-1-P). The sequence is that of Methylthioribulose-1-phosphate dehydratase from Talaromyces marneffei (strain ATCC 18224 / CBS 334.59 / QM 7333) (Penicillium marneffei).